Reading from the N-terminus, the 318-residue chain is MATAEKKQPSVIVILGPTASGKSALALAVAKKIGGEIISADSRQIYREFDIGAAKPSESALGEIRHHFVNEKNIGEPFTAGDFATEAAERIITLHRRGKRAVVAGGSTLYLEGLIEGFADLPPANPEIRARLLGELEEEGNEKLYAKLFERDPDQAATLDPTKSQRLIRSLEIIEITGLSVTELQARAKKRQHGDLCFVTTGLAMERATLYQRINHRTDNMIDAGLYDEAKGLYHKYHKLIASGKVSSLQSVGYQEFFQYLDGMISFDDAVRLIKQHTRNYAKRQLTFFHNRLSVNWTDAPLNSKELDSLAERLSKGP.

An ATP-binding site is contributed by 16-23 (GPTASGKS). 18 to 23 (TASGKS) serves as a coordination point for substrate. Interaction with substrate tRNA regions lie at residues 41–44 (DSRQ) and 165–169 (QRLIR).

This sequence belongs to the IPP transferase family. Monomer. Mg(2+) is required as a cofactor.

It catalyses the reaction adenosine(37) in tRNA + dimethylallyl diphosphate = N(6)-dimethylallyladenosine(37) in tRNA + diphosphate. Catalyzes the transfer of a dimethylallyl group onto the adenine at position 37 in tRNAs that read codons beginning with uridine, leading to the formation of N6-(dimethylallyl)adenosine (i(6)A). The chain is tRNA dimethylallyltransferase from Pelodictyon phaeoclathratiforme (strain DSM 5477 / BU-1).